Here is a 614-residue protein sequence, read N- to C-terminus: Phosphomethylpyrimidine synthase (614 aa).

Substrate is bound by residues Asn-226, Met-255, Tyr-284, His-320, 340–342 (SRG), 381–384 (DGLR), and Glu-420. Position 424 (His-424) interacts with Zn(2+). Position 447 (Tyr-447) interacts with substrate. Position 488 (His-488) interacts with Zn(2+). [4Fe-4S] cluster contacts are provided by Cys-568, Cys-571, and Cys-576.

The protein belongs to the ThiC family. As to quaternary structure, homodimer. [4Fe-4S] cluster is required as a cofactor.

The catalysed reaction is 5-amino-1-(5-phospho-beta-D-ribosyl)imidazole + S-adenosyl-L-methionine = 4-amino-2-methyl-5-(phosphooxymethyl)pyrimidine + CO + 5'-deoxyadenosine + formate + L-methionine + 3 H(+). Its pathway is cofactor biosynthesis; thiamine diphosphate biosynthesis. Its function is as follows. Catalyzes the synthesis of the hydroxymethylpyrimidine phosphate (HMP-P) moiety of thiamine from aminoimidazole ribotide (AIR) in a radical S-adenosyl-L-methionine (SAM)-dependent reaction. In Acidovorax ebreus (strain TPSY) (Diaphorobacter sp. (strain TPSY)), this protein is Phosphomethylpyrimidine synthase.